The following is a 60-amino-acid chain: Cytochrome c oxidase subunit 9, mitochondrial (60 aa).

Over 1 to 15 (MSALAPITGTLKKRI) the chain is Mitochondrial matrix. The chain crosses the membrane as a helical span at residues 16–38 (ITDIVIGFSLGGVMASYWWWGFH). Residues 39 to 57 (KNVIDRREAFYADLAEKKK) are Mitochondrial intermembrane-facing. Residues 58–60 (AEN) constitute a propeptide, removed in mature form.

The protein belongs to the fungal cytochrome c oxidase subunit 7a family. Component of the cytochrome c oxidase (complex IV, CIV), a multisubunit enzyme composed of a catalytic core of 3 subunits and several supernumerary subunits. The complex exists as a monomer or a dimer and forms supercomplexes (SCs) in the inner mitochondrial membrane with ubiquinol-cytochrome c oxidoreductase (cytochrome b-c1 complex, complex III, CIII).

It is found in the mitochondrion inner membrane. It participates in energy metabolism; oxidative phosphorylation. Functionally, component of the cytochrome c oxidase, the last enzyme in the mitochondrial electron transport chain which drives oxidative phosphorylation. The respiratory chain contains 3 multisubunit complexes succinate dehydrogenase (complex II, CII), ubiquinol-cytochrome c oxidoreductase (cytochrome b-c1 complex, complex III, CIII) and cytochrome c oxidase (complex IV, CIV), that cooperate to transfer electrons derived from NADH and succinate to molecular oxygen, creating an electrochemical gradient over the inner membrane that drives transmembrane transport and the ATP synthase. Cytochrome c oxidase is the component of the respiratory chain that catalyzes the reduction of oxygen to water. Electrons originating from reduced cytochrome c in the intermembrane space (IMS) are transferred via the dinuclear copper A center (CU(A)) of subunit 2 and heme A of subunit 1 to the active site in subunit 1, a binuclear center (BNC) formed by heme A3 and copper B (CU(B)). The BNC reduces molecular oxygen to 2 water molecules using 4 electrons from cytochrome c in the IMS and 4 protons from the mitochondrial matrix. The chain is Cytochrome c oxidase subunit 9, mitochondrial (COX9) from Candida glabrata (strain ATCC 2001 / BCRC 20586 / JCM 3761 / NBRC 0622 / NRRL Y-65 / CBS 138) (Yeast).